The primary structure comprises 219 residues: Uracil-DNA glycosylase (219 aa).

Asp61 (proton acceptor) is an active-site residue.

It belongs to the uracil-DNA glycosylase (UDG) superfamily. UNG family.

It is found in the cytoplasm. It carries out the reaction Hydrolyzes single-stranded DNA or mismatched double-stranded DNA and polynucleotides, releasing free uracil.. Excises uracil residues from the DNA which can arise as a result of misincorporation of dUMP residues by DNA polymerase or due to deamination of cytosine. The protein is Uracil-DNA glycosylase of Neisseria meningitidis serogroup C (strain 053442).